Here is a 574-residue protein sequence, read N- to C-terminus: Glutamyl-tRNA(Gln) amidotransferase subunit B, mitochondrial (574 aa).

A mitochondrion-targeting transit peptide spans 1-12 (MIRQFVSHRGIP). The segment at 34–62 (PLGRKNWSTSDEAKSKRAAMRKGGAPPPE) is disordered.

Belongs to the GatB/GatE family. GatB subfamily. As to quaternary structure, subunit of the heterotrimeric GatCAB amidotransferase (AdT) complex, composed of A, B and C subunits.

Its subcellular location is the mitochondrion. The catalysed reaction is L-glutamyl-tRNA(Gln) + L-glutamine + ATP + H2O = L-glutaminyl-tRNA(Gln) + L-glutamate + ADP + phosphate + H(+). Allows the formation of correctly charged Gln-tRNA(Gln) through the transamidation of misacylated Glu-tRNA(Gln) in the mitochondria. The reaction takes place in the presence of glutamine and ATP through an activated gamma-phospho-Glu-tRNA(Gln). The protein is Glutamyl-tRNA(Gln) amidotransferase subunit B, mitochondrial of Ajellomyces capsulatus (strain H143) (Darling's disease fungus).